A 149-amino-acid chain; its full sequence is uncharacterized protein (149 aa).

This is an uncharacterized protein from Saccharomyces cerevisiae (strain ATCC 204508 / S288c) (Baker's yeast).